The following is a 51-amino-acid chain: Sperm protamine P1 (51 aa).

It belongs to the protamine P1 family. Testis.

It is found in the nucleus. The protein localises to the chromosome. In terms of biological role, protamines substitute for histones in the chromatin of sperm during the haploid phase of spermatogenesis. They compact sperm DNA into a highly condensed, stable and inactive complex. This Colobus guereza (Mantled guereza) protein is Sperm protamine P1 (PRM1).